Reading from the N-terminus, the 423-residue chain is Probable peptidoglycan glycosyltransferase FtsW (423 aa).

Residues 1–53 lie on the Cytoplasmic side of the membrane; it reads MNLKEKLFPENRLGLNRFWNFSRGGIDNFRTGLRDAVSGVEQTRSRMMEYDQL. Residues 54–74 form a helical membrane-spanning segment; the sequence is LVWAILSLMLIGLVMVYSASI. At 75-88 the chain is on the periplasmic side; that stretch reads TLADGPKYANYSSN. The helical transmembrane segment at 89 to 109 threads the bilayer; sequence FFLIRHMISLAIAIGVGIWAF. The Cytoplasmic segment spans residues 110–119; that stretch reads KIPTKVWDRY. The chain crosses the membrane as a helical span at residues 120-140; it reads SPVIFGITVLLLIAVLIPGVG. Over 141–149 the chain is Periplasmic; that stretch reads RGVNGAKRW. The chain crosses the membrane as a helical span at residues 150 to 170; the sequence is IPLGLMNFQSSELMKFAAVIF. Over 171 to 184 the chain is Cytoplasmic; it reads AASYTVQRQEYLHS. Residues 185-205 traverse the membrane as a helical segment; sequence FVKGMLPMGIAVALVGGLLMA. Over 206-208 the chain is Periplasmic; the sequence is EPD. A helical membrane pass occupies residues 209–229; sequence MGAFVVVALIAFGILFLGGIN. Residues 230-231 lie on the Cytoplasmic side of the membrane; that stretch reads AK. The helical transmembrane segment at 232–252 threads the bilayer; sequence LFGGLIAVGLMSGATMIAFSP. Residues 253-310 are Periplasmic-facing; the sequence is LRRGRMLAFMDPWQVDNAANKGYQLTHSLMAFGRGEWFGTGLGGSVEKLHYLPEAHTD. A helical transmembrane segment spans residues 311–331; that stretch reads FIMAVIGEELGFVGVVVMIFL. The Cytoplasmic segment spans residues 332–359; the sequence is FYWIVRRAFLIGRTALQLDRSFAGLAAK. A helical transmembrane segment spans residues 360–380; that stretch reads GVAIWIGWQAFINMGVNLGLL. The Periplasmic portion of the chain corresponds to 381–386; that stretch reads PTKGLT. A helical membrane pass occupies residues 387-407; the sequence is LPLVSYGGSGILMNAVAMAML. Residues 408–423 lie on the Cytoplasmic side of the membrane; sequence LRIDFENRILMRGGKL.

It belongs to the SEDS family. FtsW subfamily.

The protein localises to the cell inner membrane. It catalyses the reaction [GlcNAc-(1-&gt;4)-Mur2Ac(oyl-L-Ala-gamma-D-Glu-L-Lys-D-Ala-D-Ala)](n)-di-trans,octa-cis-undecaprenyl diphosphate + beta-D-GlcNAc-(1-&gt;4)-Mur2Ac(oyl-L-Ala-gamma-D-Glu-L-Lys-D-Ala-D-Ala)-di-trans,octa-cis-undecaprenyl diphosphate = [GlcNAc-(1-&gt;4)-Mur2Ac(oyl-L-Ala-gamma-D-Glu-L-Lys-D-Ala-D-Ala)](n+1)-di-trans,octa-cis-undecaprenyl diphosphate + di-trans,octa-cis-undecaprenyl diphosphate + H(+). The protein operates within cell wall biogenesis; peptidoglycan biosynthesis. Peptidoglycan polymerase that is essential for cell division. The chain is Probable peptidoglycan glycosyltransferase FtsW from Polynucleobacter necessarius subsp. necessarius (strain STIR1).